The chain runs to 280 residues: Fructose-1,6-bisphosphatase class 1 (280 aa).

4 residues coordinate Mg(2+): glutamate 64, aspartate 83, leucine 85, and aspartate 86. Residues 86–89 (DGSS), tyrosine 190, and lysine 221 contribute to the substrate site. Residue glutamate 227 participates in Mg(2+) binding.

It belongs to the FBPase class 1 family. As to quaternary structure, homotetramer. It depends on Mg(2+) as a cofactor.

Its subcellular location is the cytoplasm. The enzyme catalyses beta-D-fructose 1,6-bisphosphate + H2O = beta-D-fructose 6-phosphate + phosphate. It functions in the pathway carbohydrate biosynthesis; gluconeogenesis. The protein is Fructose-1,6-bisphosphatase class 1 of Campylobacter hominis (strain ATCC BAA-381 / DSM 21671 / CCUG 45161 / LMG 19568 / NCTC 13146 / CH001A).